Here is a 1001-residue protein sequence, read N- to C-terminus: Sarcoplasmic/endoplasmic reticulum calcium ATPase 1 (1001 aa).

The Cytoplasmic segment spans residues 1 to 48 (MEAAHSKSTEECLAYFGVSETTGLTPDQVKRHLEKYGHNELPAEEGKS). Residues 49-69 (LWELVIEQFEDLLVRILLLAA) traverse the membrane as a helical segment. Topologically, residues 70–89 (CISFVLAWFEEGEETITAFV) are lumenal. The chain crosses the membrane as a helical span at residues 90 to 110 (EPFVILLILIANAIVGVWQER). Over 111–253 (NAENAIEALK…QDKTPLQQKL (143 aa)) the chain is Cytoplasmic. Residues 254 to 273 (DEFGEQLSKVISLICVAVWL) traverse the membrane as a helical segment. Residues 274–295 (INIGHFNDPVHGGSWIRGAIYY) lie on the Lumenal side of the membrane. A helical membrane pass occupies residues 296-313 (FKIAVALAVAAIPEGLPA). Ca(2+)-binding residues include Val304, Ala305, Ile307, and Glu309. The Cytoplasmic portion of the chain corresponds to 314-757 (VITTCLALGT…EEGRAIYNNM (444 aa)). Asp351 functions as the 4-aspartylphosphate intermediate in the catalytic mechanism. 2 residues coordinate Mg(2+): Asp351 and Thr353. Thr353 contributes to the ATP binding site. Thr441 is subject to Phosphothreonine. ATP contacts are provided by Glu442, Arg489, Lys515, and Arg560. A Phosphothreonine modification is found at Thr569. Ser581 bears the Phosphoserine mark. 5 residues coordinate ATP: Thr625, Gly626, Asp627, Arg678, and Lys684. Residue Asp703 participates in Mg(2+) binding. Residue Asn706 coordinates ATP. Residues 758 to 777 (KQFIRYLISSNVGEVVCIFL) form a helical membrane-spanning segment. Residues Asn768 and Glu771 each contribute to the Ca(2+) site. Over 778 to 787 (TAALGLPEAL) the chain is Lumenal. The helical transmembrane segment at 788–808 (IPVQLLWVNLVTDGLPATALG) threads the bilayer. The segment at 788 to 808 (IPVQLLWVNLVTDGLPATALG) is interaction with PLN. The Ca(2+) site is built by Asn796, Thr799, and Asp800. The Cytoplasmic segment spans residues 809–828 (FNPPDLDIMDRPPRSPKEPL). The helical transmembrane segment at 829–851 (ISGWLFFRYMAIGGYVGAATVGA) threads the bilayer. Topologically, residues 852–897 (AAWWFMYAEDGPGVTYHQLTHFMQCTEDHPHFEGLDCEIFEAPEPM) are lumenal. A disulfide bridge links Cys876 with Cys888. A helical membrane pass occupies residues 898-917 (TMALSVLVTIEMCNALNSLS). Residue Glu908 coordinates Ca(2+). Over 918 to 930 (ENQSLMRMPPWVN) the chain is Cytoplasmic. The helical transmembrane segment at 931–949 (IWLLGSICLSMSLHFLILY) threads the bilayer. The interval 932–943 (WLLGSICLSMSL) is interaction with PLN. At 950-964 (VDPLPMIFKLKALDL) the chain is on the lumenal side. Residues 965–985 (TQWLMVLKISLPVIGLDEILK) traverse the membrane as a helical segment. At 986-1001 (FIARNYLEDPEDERRK) the chain is on the cytoplasmic side.

Belongs to the cation transport ATPase (P-type) (TC 3.A.3) family. Type IIA subfamily. Interacts with sarcolipin (SLN). Interacts with phospholamban (PLN). Interacts with myoregulin (MRLN). Interacts with DWORF. Interacts with VMP1. The cofactor is Mg(2+). In terms of tissue distribution, skeletal muscle (at protein level). Skeletal muscle, fast twitch muscle (type II) fibers.

It localises to the endoplasmic reticulum membrane. Its subcellular location is the sarcoplasmic reticulum membrane. It catalyses the reaction Ca(2+)(in) + ATP + H2O = Ca(2+)(out) + ADP + phosphate + H(+). With respect to regulation, inhibited by sarcolipin (SLN) and myoregulin (MRLN). Has also been shown to be reversibly inhibited by phospholamban (PLN) at low calcium concentrations in vitro. Dephosphorylated PLN decreases the apparent affinity of the ATPase for calcium and this inhibition is regulated by the phosphorylation of PLN in vitro. Enhanced by DWORF; DWORF increases activity by displacing sarcolipin (SLN), phospholamban (PLN) and myoregulin (MRLN). Functionally, key regulator of striated muscle performance by acting as the major Ca(2+) ATPase responsible for the reuptake of cytosolic Ca(2+) into the sarcoplasmic reticulum. Catalyzes the hydrolysis of ATP coupled with the translocation of calcium from the cytosol to the sarcoplasmic reticulum lumen. Contributes to calcium sequestration involved in muscular excitation/contraction. In Oryctolagus cuniculus (Rabbit), this protein is Sarcoplasmic/endoplasmic reticulum calcium ATPase 1 (ATP2A1).